A 244-amino-acid chain; its full sequence is Transforming protein v-Fos/v-Fox (244 aa).

Residues 1-236 are transforming protein v-Fos; sequence DSLSYYHSPA…LFPASSGHSG (236 aa). A bZIP domain is found at 113–176; it reads EVKRRIRRER…EKLEFILAAH (64 aa). The interval 115-135 is basic motif; it reads KRRIRRERNKMAAAKCRNRRR. A leucine-zipper region spans residues 141–169; the sequence is LQAETDQLEDEKSALQTEIANLLKEKEKL. Residues 237 to 244 are transforming protein v-Fox; that stretch reads FISMAGWQ.

It belongs to the bZIP family. Fos subfamily.

Its subcellular location is the host nucleus. In Mus musculus (Mouse), this protein is Transforming protein v-Fos/v-Fox (FOS-FOX).